The chain runs to 61 residues: uncharacterized protein (61 aa).

Positions 24–60 (WMRYESERDEKLRMLERMRDELEAELEEIKREIERLR) form a coiled coil.

This is an uncharacterized protein from Archaeoglobus fulgidus (strain ATCC 49558 / DSM 4304 / JCM 9628 / NBRC 100126 / VC-16).